Reading from the N-terminus, the 614-residue chain is Glutamine--fructose-6-phosphate aminotransferase [isomerizing] (614 aa).

The active-site Nucleophile; for GATase activity is the Cys2. The region spanning 2–221 (CGIVGYIGKR…DGEIAVINRG (220 aa)) is the Glutamine amidotransferase type-2 domain. 2 SIS domains span residues 291–430 (YKEK…EKGT) and 463–604 (LSKT…VDQP). Catalysis depends on Lys609, which acts as the For Fru-6P isomerization activity.

As to quaternary structure, homodimer.

It is found in the cytoplasm. It carries out the reaction D-fructose 6-phosphate + L-glutamine = D-glucosamine 6-phosphate + L-glutamate. Its function is as follows. Catalyzes the first step in hexosamine metabolism, converting fructose-6P into glucosamine-6P using glutamine as a nitrogen source. This chain is Glutamine--fructose-6-phosphate aminotransferase [isomerizing], found in Bacteroides thetaiotaomicron (strain ATCC 29148 / DSM 2079 / JCM 5827 / CCUG 10774 / NCTC 10582 / VPI-5482 / E50).